The primary structure comprises 618 residues: UvrABC system protein C (618 aa).

The GIY-YIG domain occupies 13 to 92 (DKPGVYLMKN…IKKYRPKYNI (80 aa)). Residues 204-239 (LDIVENFKLNMEKAAENLEFEKAAMLRDKINIIEKI) enclose the UVR domain.

Belongs to the UvrC family. Interacts with UvrB in an incision complex.

Its subcellular location is the cytoplasm. The UvrABC repair system catalyzes the recognition and processing of DNA lesions. UvrC both incises the 5' and 3' sides of the lesion. The N-terminal half is responsible for the 3' incision and the C-terminal half is responsible for the 5' incision. In Clostridium botulinum (strain ATCC 19397 / Type A), this protein is UvrABC system protein C.